We begin with the raw amino-acid sequence, 675 residues long: Potassium-transporting ATPase ATP-binding subunit 2 (675 aa).

A run of 4 helical transmembrane segments spans residues 34-54 (IMFVVEVGMVLTLILICFPDI), 65-85 (LITIFIILLITILFANFSEAF), 216-236 (IALFTLLTTLTIIFLVVIVTL), and 245-265 (LILPIAMLIALTVCLIPTTIG). The 4-aspartylphosphate intermediate role is filled by aspartate 304. ATP contacts are provided by residues aspartate 341, glutamate 345, 372 to 379 (FTAETRMS), and lysine 390. Mg(2+) is bound by residues aspartate 513 and aspartate 517. 3 helical membrane-spanning segments follow: residues 569-591 (ALTTFSLANDVAKYFAILPALMM), 611-631 (AIISALIFNALIIVALIPIAM), and 644-664 (IFINNMLIYGLGGLIVPFLGI).

Belongs to the cation transport ATPase (P-type) (TC 3.A.3) family. Type IA subfamily. As to quaternary structure, the system is composed of three essential subunits: KdpA, KdpB and KdpC.

The protein resides in the cell membrane. It catalyses the reaction K(+)(out) + ATP + H2O = K(+)(in) + ADP + phosphate + H(+). Functionally, part of the high-affinity ATP-driven potassium transport (or Kdp) system, which catalyzes the hydrolysis of ATP coupled with the electrogenic transport of potassium into the cytoplasm. This subunit is responsible for energy coupling to the transport system and for the release of the potassium ions to the cytoplasm. This chain is Potassium-transporting ATPase ATP-binding subunit 2, found in Staphylococcus aureus (strain Mu50 / ATCC 700699).